The chain runs to 97 residues: Peptide YY (97 aa).

The first 28 residues, 1–28, serve as a signal peptide directing secretion; it reads MVFVRRPWPALTTVLLALLVCLGALVDA. Serine 41 carries the post-translational modification Phosphoserine. Tyrosine 64 bears the Tyrosine amide mark. Residues 65–97 are disordered; that stretch reads GKRDGPDTLLSKTFFPDGEDRPVRSRSEGPDLW. The propeptide occupies 68 to 97; the sequence is DGPDTLLSKTFFPDGEDRPVRSRSEGPDLW. Over residues 82-97 the composition is skewed to basic and acidic residues; that stretch reads GEDRPVRSRSEGPDLW.

The protein belongs to the NPY family. In terms of processing, the peptide YY form is cleaved at Pro-30 by the prolyl endopeptidase FAP (seprase) activity (in vitro) to generate peptide YY(3-36).

The protein localises to the secreted. This gut peptide inhibits exocrine pancreatic secretion, has a vasoconstrictory action and inhibitis jejunal and colonic mobility. The polypeptide is Peptide YY (PYY) (Homo sapiens (Human)).